A 300-amino-acid polypeptide reads, in one-letter code: N-acetylmuramic acid 6-phosphate etherase (300 aa).

The SIS domain maps to 57 to 220 (VAAALRAGGR…STGAMIRIGK (164 aa)). The active-site Proton donor is Glu85. Glu116 is a catalytic residue.

It belongs to the GCKR-like family. MurNAc-6-P etherase subfamily. As to quaternary structure, homodimer.

The enzyme catalyses N-acetyl-D-muramate 6-phosphate + H2O = N-acetyl-D-glucosamine 6-phosphate + (R)-lactate. The protein operates within amino-sugar metabolism; 1,6-anhydro-N-acetylmuramate degradation. It functions in the pathway amino-sugar metabolism; N-acetylmuramate degradation. Its pathway is cell wall biogenesis; peptidoglycan recycling. Functionally, specifically catalyzes the cleavage of the D-lactyl ether substituent of MurNAc 6-phosphate, producing GlcNAc 6-phosphate and D-lactate. Together with AnmK, is also required for the utilization of anhydro-N-acetylmuramic acid (anhMurNAc) either imported from the medium or derived from its own cell wall murein, and thus plays a role in cell wall recycling. In Klebsiella aerogenes (Enterobacter aerogenes), this protein is N-acetylmuramic acid 6-phosphate etherase.